The chain runs to 308 residues: tRNA dimethylallyltransferase (308 aa).

14 to 21 (GPTASGKT) is a binding site for ATP. 16-21 (TASGKT) is a substrate binding site. Interaction with substrate tRNA stretches follow at residues 39 to 42 (DSAL), 163 to 167 (QRLSR), and 244 to 249 (RCVGYR).

It belongs to the IPP transferase family. In terms of assembly, monomer. Requires Mg(2+) as cofactor.

It catalyses the reaction adenosine(37) in tRNA + dimethylallyl diphosphate = N(6)-dimethylallyladenosine(37) in tRNA + diphosphate. In terms of biological role, catalyzes the transfer of a dimethylallyl group onto the adenine at position 37 in tRNAs that read codons beginning with uridine, leading to the formation of N6-(dimethylallyl)adenosine (i(6)A). The polypeptide is tRNA dimethylallyltransferase (Shewanella loihica (strain ATCC BAA-1088 / PV-4)).